We begin with the raw amino-acid sequence, 382 residues long: Alkanesulfonate monooxygenase (382 aa).

It belongs to the SsuD family.

It catalyses the reaction an alkanesulfonate + FMNH2 + O2 = an aldehyde + FMN + sulfite + H2O + 2 H(+). Its function is as follows. Catalyzes the desulfonation of aliphatic sulfonates. This Pseudomonas entomophila (strain L48) protein is Alkanesulfonate monooxygenase.